We begin with the raw amino-acid sequence, 261 residues long: Cytochrome c oxidase subunit 3 (261 aa).

Over 1 to 15 the chain is Mitochondrial matrix; that stretch reads MSHQAHAYHMVDPSP. Residues 16–34 form a helical membrane-spanning segment; the sequence is WPLTGAGAALLMTSGLAMW. The Mitochondrial intermembrane segment spans residues 35 to 40; sequence FHKNSC. The helical transmembrane segment at 41 to 66 threads the bilayer; the sequence is ILMTLGLILMLLTMYQWWRDIVREGT. The Mitochondrial matrix segment spans residues 67 to 72; sequence FLGHHT. A helical membrane pass occupies residues 73–105; that stretch reads SPVQQGLRYGMILFIISEVCFFAGFFWAFYHAS. The Mitochondrial intermembrane segment spans residues 106 to 128; it reads LAPTPELGLTWPPTGINPLNPFE. A helical membrane pass occupies residues 129–152; it reads VPLLNTAVLLASGVSVTWAHHSIT. Over 153-155 the chain is Mitochondrial matrix; that stretch reads EKN. The helical transmembrane segment at 156–183 threads the bilayer; sequence RTETTQALTLTVLLGLYFTALQIMEYYE. Over 184–190 the chain is Mitochondrial intermembrane; the sequence is TPFTMAD. Residues 191–223 traverse the membrane as a helical segment; that stretch reads GVYGSTFFVATGFHGLHVIIGSLFLLTCLLRHL. The Mitochondrial matrix segment spans residues 224 to 232; that stretch reads QYHFTSKHH. The chain crosses the membrane as a helical span at residues 233–256; that stretch reads FGFEAAAWYWHFVDVVWLFLYISI. Residues 257–261 lie on the Mitochondrial intermembrane side of the membrane; the sequence is YWWGS.

It belongs to the cytochrome c oxidase subunit 3 family. Component of the cytochrome c oxidase (complex IV, CIV), a multisubunit enzyme composed of 14 subunits. The complex is composed of a catalytic core of 3 subunits MT-CO1, MT-CO2 and MT-CO3, encoded in the mitochondrial DNA, and 11 supernumerary subunits COX4I, COX5A, COX5B, COX6A, COX6B, COX6C, COX7A, COX7B, COX7C, COX8 and NDUFA4, which are encoded in the nuclear genome. The complex exists as a monomer or a dimer and forms supercomplexes (SCs) in the inner mitochondrial membrane with NADH-ubiquinone oxidoreductase (complex I, CI) and ubiquinol-cytochrome c oxidoreductase (cytochrome b-c1 complex, complex III, CIII), resulting in different assemblies (supercomplex SCI(1)III(2)IV(1) and megacomplex MCI(2)III(2)IV(2)).

It localises to the mitochondrion inner membrane. It carries out the reaction 4 Fe(II)-[cytochrome c] + O2 + 8 H(+)(in) = 4 Fe(III)-[cytochrome c] + 2 H2O + 4 H(+)(out). Its function is as follows. Component of the cytochrome c oxidase, the last enzyme in the mitochondrial electron transport chain which drives oxidative phosphorylation. The respiratory chain contains 3 multisubunit complexes succinate dehydrogenase (complex II, CII), ubiquinol-cytochrome c oxidoreductase (cytochrome b-c1 complex, complex III, CIII) and cytochrome c oxidase (complex IV, CIV), that cooperate to transfer electrons derived from NADH and succinate to molecular oxygen, creating an electrochemical gradient over the inner membrane that drives transmembrane transport and the ATP synthase. Cytochrome c oxidase is the component of the respiratory chain that catalyzes the reduction of oxygen to water. Electrons originating from reduced cytochrome c in the intermembrane space (IMS) are transferred via the dinuclear copper A center (CU(A)) of subunit 2 and heme A of subunit 1 to the active site in subunit 1, a binuclear center (BNC) formed by heme A3 and copper B (CU(B)). The BNC reduces molecular oxygen to 2 water molecules using 4 electrons from cytochrome c in the IMS and 4 protons from the mitochondrial matrix. This is Cytochrome c oxidase subunit 3 (MT-CO3) from Petromyzon marinus (Sea lamprey).